Consider the following 386-residue polypeptide: Agamous-like MADS-box protein AGL30 (386 aa).

One can recognise an MADS-box domain in the interval 1–53 (MGRVKLKIKKLENTNGRQSTFAKRKNGILKKANELSILCDIDIVLLMFSPTGK). A disordered region spans residues 341–360 (PDSSAYNDNTNQTRFGSSSS). Polar residues predominate over residues 344–356 (SAYNDNTNQTRFG).

As to quaternary structure, forms heterodimers with AGL66 and AGL104. Expressed in pollen.

It is found in the nucleus. Functionally, probable transcription factor that forms heterodimers with the MADS-box proteins AGL66 and AGL104 and is involved in the regulation of pollen maturation at the late stages of pollen development and pollen tube growth. The chain is Agamous-like MADS-box protein AGL30 from Arabidopsis thaliana (Mouse-ear cress).